We begin with the raw amino-acid sequence, 66 residues long: Large ribosomal subunit protein bL35 (66 aa).

Composition is skewed to basic residues over residues Met-1–Arg-16 and His-31–Arg-45. The segment at Met-1–Ala-52 is disordered.

This sequence belongs to the bacterial ribosomal protein bL35 family.

The chain is Large ribosomal subunit protein bL35 from Ligilactobacillus salivarius (strain UCC118) (Lactobacillus salivarius).